The following is a 726-amino-acid chain: Beta-adducin (726 aa).

The interval 1–25 (MSEETVPEAASPPPPQGQPYFDRFS) is disordered. Ser-11 and Ser-25 each carry phosphoserine. Residue Thr-55 is modified to Phosphothreonine; by PKA. Residues Ser-60 and Ser-344 each carry the phosphoserine modification. The segment at 425-444 (KQQKEKTRWLNTPNTYLRVN) is interaction with calmodulin. A disordered region spans residues 525 to 726 (AEKSRSPSTE…KSKKKEKVES (202 aa)). Ser-530 and Ser-532 each carry phosphoserine. A Phosphothreonine modification is found at Thr-533. At Ser-535 the chain carries Phosphoserine. A compositionally biased stretch (basic and acidic residues) spans 566–586 (EEYKKEVERKKLELDGEKETA). A compositionally biased stretch (low complexity) spans 588–606 (EEPGSPAKSAPASPVQSPA). 4 positions are modified to phosphoserine: Ser-592, Ser-596, Ser-600, and Ser-604. Thr-611 carries the phosphothreonine modification. Residues Ser-613, Ser-617, Ser-619, and Ser-621 each carry the phosphoserine modification. Residues 621–631 (SLEEGTKKTET) show a composition bias toward basic and acidic residues. Residues 632-645 (SKAATTEPETTQPE) are compositionally biased toward low complexity. The span at 665 to 674 (GLSQMTTSAD) shows a compositional bias: polar residues. Thr-675 carries the post-translational modification Phosphothreonine. Ser-686, Ser-689, Ser-693, Ser-697, Ser-699, and Ser-701 each carry phosphoserine. A compositionally biased stretch (low complexity) spans 689–701 (SGPMSPEGSPSKS). The span at 702–726 (PSKKKKKFRTPSFLKKSKKKEKVES) shows a compositional bias: basic residues. Ser-703 carries the post-translational modification Phosphoserine; by PKC. The tract at residues 704–721 (KKKKKFRTPSFLKKSKKK) is interaction with calmodulin. The residue at position 713 (Ser-713) is a Phosphoserine; by PKA and PKC.

The protein belongs to the aldolase class II family. Adducin subfamily. Heterodimer of an alpha and a beta subunit. Found in a complex with ADD2, DMTN and SLC2A1. Interacts with SLC2A1. Post-translationally, the N-terminus is blocked. In terms of tissue distribution, expressed mainly in brain, spleen, kidney cortex and medulla, and heart. Also expressed in human umbilical vein endothelial cells, human vascular smooth muscle cells, kidney tubular cells and K-562 cell line.

It localises to the cytoplasm. Its subcellular location is the cytoskeleton. It is found in the cell membrane. Membrane-cytoskeleton-associated protein that promotes the assembly of the spectrin-actin network. Binds to the erythrocyte membrane receptor SLC2A1/GLUT1 and may therefore provide a link between the spectrin cytoskeleton to the plasma membrane. Binds to calmodulin. Calmodulin binds preferentially to the beta subunit. This is Beta-adducin (ADD2) from Homo sapiens (Human).